The following is a 498-amino-acid chain: ATP synthase subunit beta, chloroplastic (498 aa).

172-179 (GGAGVGKT) provides a ligand contact to ATP.

This sequence belongs to the ATPase alpha/beta chains family. F-type ATPases have 2 components, CF(1) - the catalytic core - and CF(0) - the membrane proton channel. CF(1) has five subunits: alpha(3), beta(3), gamma(1), delta(1), epsilon(1). CF(0) has four main subunits: a(1), b(1), b'(1) and c(9-12).

The protein localises to the plastid. Its subcellular location is the chloroplast thylakoid membrane. It carries out the reaction ATP + H2O + 4 H(+)(in) = ADP + phosphate + 5 H(+)(out). Its function is as follows. Produces ATP from ADP in the presence of a proton gradient across the membrane. The catalytic sites are hosted primarily by the beta subunits. This chain is ATP synthase subunit beta, chloroplastic, found in Populus alba (White poplar).